The sequence spans 184 residues: Photosystem I assembly protein Ycf4 (184 aa).

A run of 2 helical transmembrane segments spans residues 19-39 and 64-84; these read ISNF…VLVG and LVMS…WCTI.

This sequence belongs to the Ycf4 family.

It localises to the plastid. The protein resides in the chloroplast thylakoid membrane. Seems to be required for the assembly of the photosystem I complex. This is Photosystem I assembly protein Ycf4 from Oenothera elata subsp. hookeri (Hooker's evening primrose).